The chain runs to 119 residues: Non-specific lipid-transfer protein 11 (119 aa).

The N-terminal stretch at 1–28 is a signal peptide; the sequence is MRNITTTTRKMLLLVITILLGIAYHGEA. 4 disulfide bridges follow: C31–C78, C41–C55, C56–C101, and C76–C115.

Belongs to the plant LTP family.

Its function is as follows. Plant non-specific lipid-transfer proteins transfer phospholipids as well as galactolipids across membranes. May play a role in wax or cutin deposition in the cell walls of expanding epidermal cells and certain secretory tissues. The sequence is that of Non-specific lipid-transfer protein 11 (LTP11) from Arabidopsis thaliana (Mouse-ear cress).